The sequence spans 313 residues: Formimidoylglutamase (313 aa).

Mn(2+)-binding residues include H130, D155, H157, D159, D241, and D243.

It belongs to the arginase family. Mn(2+) is required as a cofactor.

It catalyses the reaction N-formimidoyl-L-glutamate + H2O = formamide + L-glutamate. The protein operates within amino-acid degradation; L-histidine degradation into L-glutamate; L-glutamate from N-formimidoyl-L-glutamate (hydrolase route): step 1/1. In terms of biological role, catalyzes the conversion of N-formimidoyl-L-glutamate to L-glutamate and formamide. This is Formimidoylglutamase from Salmonella schwarzengrund (strain CVM19633).